The following is a 352-amino-acid chain: tRNA pseudouridine synthase D (352 aa).

The Nucleophile role is filled by Asp81. Residues 157 to 303 (GVPNYFGGQR…MSHERRILRL (147 aa)) form the TRUD domain.

It belongs to the pseudouridine synthase TruD family.

The enzyme catalyses uridine(13) in tRNA = pseudouridine(13) in tRNA. Responsible for synthesis of pseudouridine from uracil-13 in transfer RNAs. The chain is tRNA pseudouridine synthase D from Pseudomonas putida (strain W619).